A 528-amino-acid polypeptide reads, in one-letter code: Protein DA1-related 2 (528 aa).

The segment at 60-108 (SNGGGSGAHTNHHPPQFQEDENMVFPLPPSSLDDRSRGARDKEELDRSI) is disordered. Residues 91 to 106 (LDDRSRGARDKEELDR) show a composition bias toward basic and acidic residues. Residues 99 to 118 (RDKEELDRSISLSLADNTKR) form the UIM 1 domain. The 22-residue stretch at 127-148 (DNNRDFPRPFHGGLNPSSFIPP) folds into the UIM 2; degenerate domain. One can recognise an LIM zinc-binding domain in the interval 160-220 (RICGGCNSDI…KLCFKELTHP (61 aa)). The segment at 447-474 (DPSTRNLPSTSSVATSSSSSFSNKKGGK) is disordered. Low complexity predominate over residues 455–470 (STSSVATSSSSSFSNK).

Interacts with ubiquitin, TCP14 and TCP15. Post-translationally, polyubiquitinated by DA2. In terms of tissue distribution, expressed in the vasculature of leaves, inflorescence stems, flowers, hypocotyls, and primary and lateral roots. In roots, expressed in phloem companion cells.

Functionally, acts redundantly with DA1 and DAR1 to regulate endoreduplication during leaf development. Together with DA1 and DAR1, modulates the protein stability of the transcription factors TCP14 and TCP15, which repress endoreduplication by directly regulating the expression of cell-cycle genes. Involved in root phloem development. Is an essential component of early phloem development, long-distance delivery of phloem content, and proper maintenance of root system architecture. Involved in the control of root meristem size. Functions genetically downstream of cytokinin and IAA3 to maintain normal auxin distribution by influencing polar auxin transport. Acts through the PLETHORA pathway, upstream of PLT1 and PLT2 to influence root stem cell niche activity and thus control root meristem size. The protein is Protein DA1-related 2 of Arabidopsis thaliana (Mouse-ear cress).